The sequence spans 329 residues: D-alanine--D-alanine ligase (329 aa).

Residues 120–326 enclose the ATP-grasp domain; that stretch reads KLWYDALDIP…FHEFLEDCIN (207 aa). 150 to 205 serves as a coordination point for ATP; it reads AFEKWGKVFVKAARQGSSVGCYSVAEKQAIAKAVNDAFGYSDQVLVEKAVKPRELE. Mg(2+) contacts are provided by aspartate 280, glutamate 293, and asparagine 295.

Belongs to the D-alanine--D-alanine ligase family. It depends on Mg(2+) as a cofactor. Mn(2+) serves as cofactor.

It is found in the cytoplasm. The enzyme catalyses 2 D-alanine + ATP = D-alanyl-D-alanine + ADP + phosphate + H(+). It participates in cell wall biogenesis; peptidoglycan biosynthesis. Cell wall formation. The chain is D-alanine--D-alanine ligase from Vibrio parahaemolyticus serotype O3:K6 (strain RIMD 2210633).